Reading from the N-terminus, the 24-residue chain is Humanin-like 3 (24 aa).

This sequence belongs to the humanin family. In terms of tissue distribution, highly expressed in testis. Also expressed in kidney, heart, skeletal muscles and brain.

The protein localises to the secreted. Its subcellular location is the cytoplasm. Its function is as follows. Plays a role as a neuroprotective and antiapoptotic factor. This is Humanin-like 3 from Homo sapiens (Human).